A 296-amino-acid chain; its full sequence is Glycine N-acyltransferase (296 aa).

N6-acetyllysine; alternate is present on Lys-16. Lys-16 is subject to N6-succinyllysine; alternate. Lys-113 is modified (N6-acetyllysine). Lys-127, Lys-141, and Lys-142 each carry N6-acetyllysine; alternate. N6-succinyllysine; alternate occurs at positions 127, 141, and 142. Residues Lys-159 and Lys-167 each carry the N6-acetyllysine modification. An N6-succinyllysine modification is found at Lys-169. Lys-183 and Lys-256 each carry N6-acetyllysine; alternate. N6-succinyllysine; alternate occurs at positions 183 and 256. Lys-267 carries the post-translational modification N6-succinyllysine.

This sequence belongs to the glycine N-acyltransferase family.

The protein localises to the mitochondrion. It carries out the reaction an acyl-CoA + glycine = an N-acylglycine + CoA + H(+). The catalysed reaction is benzoyl-CoA + glycine = N-benzoylglycine + CoA + H(+). Mitochondrial acyltransferase which transfers an acyl group to the N-terminus of glycine and glutamine, although much less efficiently. Can conjugate a multitude of substrates to form a variety of N-acylglycines, thereby detoxify xenobiotics, such as benzoic acid or salicylic acid, and endogenous organic acids, such as isovaleric acid. This Mus musculus (Mouse) protein is Glycine N-acyltransferase (Glyat).